Consider the following 439-residue polypeptide: Methylenetetrahydrofolate--tRNA-(uracil-5-)-methyltransferase TrmFO (439 aa).

Gly9–Gly14 is a binding site for FAD.

It belongs to the MnmG family. TrmFO subfamily. FAD is required as a cofactor.

The protein localises to the cytoplasm. It carries out the reaction uridine(54) in tRNA + (6R)-5,10-methylene-5,6,7,8-tetrahydrofolate + NADH + H(+) = 5-methyluridine(54) in tRNA + (6S)-5,6,7,8-tetrahydrofolate + NAD(+). It catalyses the reaction uridine(54) in tRNA + (6R)-5,10-methylene-5,6,7,8-tetrahydrofolate + NADPH + H(+) = 5-methyluridine(54) in tRNA + (6S)-5,6,7,8-tetrahydrofolate + NADP(+). Functionally, catalyzes the folate-dependent formation of 5-methyl-uridine at position 54 (M-5-U54) in all tRNAs. This Desulforudis audaxviator (strain MP104C) protein is Methylenetetrahydrofolate--tRNA-(uracil-5-)-methyltransferase TrmFO.